Here is a 1013-residue protein sequence, read N- to C-terminus: Hemoglobin-binding protein A (1013 aa).

Residues 1–24 (MTNFKFSLLACSIAFALNASTAYA) form the signal peptide. Repeat copies occupy residues 26–29 (QPTN), 30–33 (QPTN), 34–37 (QPTN), 38–41 (QPTN), 42–45 (QPTN), 46–49 (QPTN), 50–53 (QPTN), and 54–57 (QPTN). An 8 X 4 AA tandem repeats of Q-P-T-N region spans residues 26–57 (QPTNQPTNQPTNQPTNQPTNQPTNQPTNQPTN). Over residues 26 to 58 (QPTNQPTNQPTNQPTNQPTNQPTNQPTNQPTNQ) the composition is skewed to low complexity. Residues 26-61 (QPTNQPTNQPTNQPTNQPTNQPTNQPTNQPTNQDSN) form a disordered region. The short motif at 67–74 (EQINVSGS) is the TonB box element. The region spanning 78 to 205 (SDSKTPPKIA…LGGSVIYKTK (128 aa)) is the TBDR plug domain. In terms of domain architecture, TBDR beta-barrel spans 213–1013 (NKDYYVSYKK…NYKMSVQFEF (801 aa)). A TonB C-terminal box motif is present at residues 996–1013 (NRFYAPGRNYKMSVQFEF).

It belongs to the TonB-dependent receptor family. Hemoglobin/haptoglobin binding protein subfamily.

It localises to the cell outer membrane. Functionally, acts as a receptor for hemoglobin of the human host and is required for heme uptake. The sequence is that of Hemoglobin-binding protein A (hgbA) from Haemophilus influenzae.